Reading from the N-terminus, the 639-residue chain is MAPNPPKGTSSRAWDAVTPPLSEWVLEAMSSMGFARMTPVQASAIPLFMAHKDVVVEAVTGSGKTLSFLLPIVEKLLRLEEPIKKHHIGAIIISPTRELASQIHSVMQSLLAFHPPSAAAMTPLDDDDAPRQKFPSSTLKVVPQLLLGGSTTPAEDLSRFLKLSPNVLVSTPGRLLELLSSPHVHCPQSSFEMLVLDEADRLLDLGFKETLQNILRRLPKQRRTGLFSASVSEAVDQIVRVGLRNPVKIMVKVKGTSGVDDKRTPASLQMTYLSTPPLHKFAALKNILSSVQPTPQKSIFFVSTCSGVDYLSAILPLLLGDDFLLIPLHGKHQANVRQKNFNRFLSSHSPAILLTTDVASRGLDIPSVDLVVQIDPPSDPKTFIHRCGRAGRAGRRGLSVVMLHPGREEDYVSFLDVRKTPVVPFSPSISFSDADATSATARARKAVLADRALHDRGQKAFVSWLRSYSKHQASSIFRVADLDWEALGKAWGLLKLPKMPELRSFTGDKTLGVSLDWDNFSYKDKQREKRRKELLQEAAESGVSQPSSNKRRASESVAWSQNAENKNKKLQRREYKKLKQEKTKWENMTEEERQKARETKEMVEELRAKNLEERRFRQAAAKAETAKAGGEDEEFKGFD.

A Q motif motif is present at residues 14-42 (WDAVTPPLSEWVLEAMSSMGFARMTPVQA). The Helicase ATP-binding domain maps to 45–249 (IPLFMAHKDV…RVGLRNPVKI (205 aa)). 58-65 (AVTGSGKT) contributes to the ATP binding site. A DEAD box motif is present at residues 197-200 (DEAD). In terms of domain architecture, Helicase C-terminal spans 283–437 (ALKNILSSVQ…SISFSDADAT (155 aa)). Disordered stretches follow at residues 531-601 (RKEL…ETKE) and 620-639 (AAKA…KGFD). Residues 561 to 624 (QNAENKNKKL…RFRQAAAKAE (64 aa)) are a coiled coil. Basic and acidic residues predominate over residues 577–601 (KLKQEKTKWENMTEEERQKARETKE).

It belongs to the DEAD box helicase family. DDX55/SPB4 subfamily. Component of pre-60S ribosomal complexes.

The protein localises to the nucleus. It is found in the nucleolus. The catalysed reaction is ATP + H2O = ADP + phosphate + H(+). ATP-binding RNA helicase involved in the biogenesis of 60S ribosomal subunits. Binds 90S pre-ribosomal particles and dissociates from pre-60S ribosomal particles after processing of 27SB pre-rRNA. Required for the normal formation of 18S rRNA through the processing of pre-rRNAs at sites A0, A1 and A2, and the normal formation of 25S and 5.8S rRNAs through the processing of pre-rRNAs at sites C1 and C2. This chain is ATP-dependent rRNA helicase spb4, found in Aspergillus clavatus (strain ATCC 1007 / CBS 513.65 / DSM 816 / NCTC 3887 / NRRL 1 / QM 1276 / 107).